A 915-amino-acid chain; its full sequence is Protein SLFN14 (915 aa).

Positions A157–P167 are enriched in basic residues. The interval A157–Q176 is disordered. A required for endoribonuclease activity region spans residues E204 to Q389. The required for ribosome binding stretch occupies residues R390 to L569.

Associates with ribosomes in an ATP-independent manner. Mg(2+) is required as a cofactor. It depends on Mn(2+) as a cofactor. Detected in reticulocytes (at protein level).

Its subcellular location is the nucleus. In terms of biological role, shows no ribosome-associated and endoribonuclease activities. Its function is as follows. Displays polysome-associated endoribonuclease activity towards mRNAs and rRNAs. May play a role in RNA surveillance pathways by recognizing stalled ribosomes and triggering endonucleolytic cleavage of aberrant mRNAs. Cleaves RNAs in a magnesium-, manganese-dependent and ATP-independent manner. Involved in correct maturation of megakaryocytes and especially important for proplatelet extension. The chain is Protein SLFN14 from Oryctolagus cuniculus (Rabbit).